We begin with the raw amino-acid sequence, 1788 residues long: Protein TIC 214 (1788 aa).

6 helical membrane passes run 25 to 45, 70 to 90, 95 to 115, 132 to 152, 180 to 200, and 223 to 243; these read IINS…FSIG, IGFI…PLHL, PHTI…WNNH, LNIQ…HFIL, VGWL…LFWI, and IFSI…PSPL. 2 disordered regions span residues 248–297 and 1482–1526; these read LKKT…EEKE and DLEN…DFDR. Composition is skewed to basic and acidic residues over residues 253-277 and 1513-1526; these read KREE…EKGT and PLKK…DFDR.

Belongs to the TIC214 family. As to quaternary structure, part of the Tic complex.

It localises to the plastid. Its subcellular location is the chloroplast inner membrane. Involved in protein precursor import into chloroplasts. May be part of an intermediate translocation complex acting as a protein-conducting channel at the inner envelope. The chain is Protein TIC 214 from Ranunculus macranthus (Large buttercup).